A 179-amino-acid polypeptide reads, in one-letter code: Large ribosomal subunit protein uL6 (179 aa).

It belongs to the universal ribosomal protein uL6 family. As to quaternary structure, part of the 50S ribosomal subunit.

Its function is as follows. This protein binds to the 23S rRNA, and is important in its secondary structure. It is located near the subunit interface in the base of the L7/L12 stalk, and near the tRNA binding site of the peptidyltransferase center. The protein is Large ribosomal subunit protein uL6 of Pseudomonas savastanoi pv. phaseolicola (strain 1448A / Race 6) (Pseudomonas syringae pv. phaseolicola (strain 1448A / Race 6)).